We begin with the raw amino-acid sequence, 875 residues long: Cell surface glycoprotein (875 aa).

Positions 1–23 are cleaved as a signal peptide; it reads MTNTKQKINAVFLSALMVMSVFA. Residues 137 to 157 are compositionally biased toward polar residues; the sequence is EVQNGGSGDVTGSTLQTSSSG. Disordered stretches follow at residues 137-158 and 197-217; these read EVQNGGSGDVTGSTLQTSSSGP and LPTADRNNDNGASGSNGDFDV. Residues 205–216 are compositionally biased toward low complexity; the sequence is DNGASGSNGDFD. An N-linked (GlcNAc...) asparagine glycan is attached at asparagine 253. A disordered region spans residues 380 to 414; sequence YPASDSSNDGYASGGSHASSVTVRDTDGDGTDDSE. The span at 383–402 shows a compositional bias: polar residues; the sequence is SDSSNDGYASGGSHASSVTV. Residues asparagine 455, asparagine 563, asparagine 715, and asparagine 774 are each glycosylated (N-linked (GlcNAc...) asparagine). The segment at 794-852 is disordered; it reads EAGSLEEEQPDTETPEPDTETPEPDTETPEPDTETPEPDTETPEPDTETEEATTEASGP. A compositionally biased stretch (acidic residues) spans 797 to 846; that stretch reads SLEEEQPDTETPEPDTETPEPDTETPEPDTETPEPDTETPEPDTETEEAT. Residues 851–875 form a helical membrane-spanning segment; that stretch reads GPGFTAAIALIALVAAALLAVRRDN. The PGF sorting signal signature appears at 852–854; it reads PGF.

This sequence belongs to the halobacterial S-layer protein family. Post-translationally, asn-455 is glycosylated by a pentasaccharide comprising a hexose, 2 hexuronic acids, a methyl ester of a hexuronic acid and a final hexose. The complete pentasaccharide is first assembled on dolichol phosphate and then transferred the glycan to the target Asn. Cleaved by the archaeosortase ArtA at the C-terminus, with removal of a short hydrophobic segment. In terms of processing, lipidation.

It is found in the secreted. It localises to the cell wall. The protein localises to the S-layer. The protein resides in the cell membrane. In terms of biological role, S-layer protein. The S-layer is a paracrystalline mono-layered assembly of proteins which coat the surface of the cell. The polypeptide is Cell surface glycoprotein (csg1) (Haloarcula marismortui (strain ATCC 43049 / DSM 3752 / JCM 8966 / VKM B-1809) (Halobacterium marismortui)).